The chain runs to 179 residues: Bifunctional protein PyrR (179 aa).

The short motif at 97–109 (VILIDDVLFTGRT) is the PRPP-binding element.

Belongs to the purine/pyrimidine phosphoribosyltransferase family. PyrR subfamily.

It catalyses the reaction UMP + diphosphate = 5-phospho-alpha-D-ribose 1-diphosphate + uracil. Functionally, regulates the transcription of the pyrimidine nucleotide (pyr) operon in response to exogenous pyrimidines. Its function is as follows. Also displays a weak uracil phosphoribosyltransferase activity which is not physiologically significant. The sequence is that of Bifunctional protein PyrR from Actinobacillus pleuropneumoniae serotype 5b (strain L20).